The following is a 497-amino-acid chain: Probable malate:quinone oxidoreductase (497 aa).

The protein belongs to the MQO family. It depends on FAD as a cofactor.

The catalysed reaction is (S)-malate + a quinone = a quinol + oxaloacetate. Its pathway is carbohydrate metabolism; tricarboxylic acid cycle; oxaloacetate from (S)-malate (quinone route): step 1/1. The polypeptide is Probable malate:quinone oxidoreductase (Rhodopseudomonas palustris (strain ATCC BAA-98 / CGA009)).